A 202-amino-acid chain; its full sequence is uncharacterized protein (202 aa).

The 202-residue stretch at 1–202 (MRGILRMTVL…KGLRSAAEKR (202 aa)) folds into the START domain.

In terms of biological role, may play a role in the interaction of the bacterium with animal cells. This is an uncharacterized protein from Pseudomonas aeruginosa (strain ATCC 15692 / DSM 22644 / CIP 104116 / JCM 14847 / LMG 12228 / 1C / PRS 101 / PAO1).